The chain runs to 175 residues: ATP synthase subunit b (175 aa).

A helical membrane pass occupies residues 14–34 (LSPNPGLIFWTTVSFVIVLLI).

Belongs to the ATPase B chain family. F-type ATPases have 2 components, F(1) - the catalytic core - and F(0) - the membrane proton channel. F(1) has five subunits: alpha(3), beta(3), gamma(1), delta(1), epsilon(1). F(0) has four main subunits: a(1), b(2) and c(10-14). The alpha and beta chains form an alternating ring which encloses part of the gamma chain. F(1) is attached to F(0) by a central stalk formed by the gamma and epsilon chains, while a peripheral stalk is formed by the delta and b chains.

The protein localises to the cell inner membrane. In terms of biological role, f(1)F(0) ATP synthase produces ATP from ADP in the presence of a proton or sodium gradient. F-type ATPases consist of two structural domains, F(1) containing the extramembraneous catalytic core and F(0) containing the membrane proton channel, linked together by a central stalk and a peripheral stalk. During catalysis, ATP synthesis in the catalytic domain of F(1) is coupled via a rotary mechanism of the central stalk subunits to proton translocation. Functionally, component of the F(0) channel, it forms part of the peripheral stalk, linking F(1) to F(0). The chain is ATP synthase subunit b from Chlorobium phaeobacteroides (strain DSM 266 / SMG 266 / 2430).